The primary structure comprises 282 residues: tRNA (guanine-N(1)-)-methyltransferase (282 aa).

S-adenosyl-L-methionine-binding positions include Gly-157 and 177 to 182; that span reads VGDYIL.

The protein belongs to the RNA methyltransferase TrmD family. Homodimer.

It is found in the cytoplasm. It carries out the reaction guanosine(37) in tRNA + S-adenosyl-L-methionine = N(1)-methylguanosine(37) in tRNA + S-adenosyl-L-homocysteine + H(+). Functionally, specifically methylates guanosine-37 in various tRNAs. The chain is tRNA (guanine-N(1)-)-methyltransferase from Rickettsia bellii (strain RML369-C).